We begin with the raw amino-acid sequence, 69 residues long: MSQNNFYMVEHVDQVKNEVHLSKYLFNKQVIVKVSEKEAAAYAEFMNGAVEHDSIPFVKYDEERGLICE.

This is an uncharacterized protein from Bacillus anthracis.